A 78-amino-acid chain; its full sequence is Polcalcin Phl p 7 (78 aa).

EF-hand domains are found at residues 1 to 35 (MADD…LGST) and 35 to 70 (TSAD…NPGL). Ca(2+) is bound by residues aspartate 13, asparagine 15, aspartate 17, lysine 19, glutamate 24, aspartate 48, aspartate 50, aspartate 52, and glutamate 59.

Monomer. Specifically expressed in pollen.

May be involved in the regulation of pollen-tube growth. The polypeptide is Polcalcin Phl p 7 (Phleum pratense (Common timothy)).